The following is a 380-amino-acid chain: Queuine tRNA-ribosyltransferase (380 aa).

Residue Asp-95 is the Proton acceptor of the active site. Residues 95–99 (DSGGF), Asp-149, Gln-192, and Gly-219 contribute to the substrate site. An RNA binding region spans residues 250–256 (GVGSPDS). Residue Asp-269 is the Nucleophile of the active site. Positions 274-278 (TRIGR) are RNA binding; important for wobble base 34 recognition. Residues Cys-307, Cys-309, Cys-312, and His-338 each contribute to the Zn(2+) site.

Belongs to the queuine tRNA-ribosyltransferase family. As to quaternary structure, homodimer. Within each dimer, one monomer is responsible for RNA recognition and catalysis, while the other monomer binds to the replacement base PreQ1. Zn(2+) serves as cofactor.

It catalyses the reaction 7-aminomethyl-7-carbaguanine + guanosine(34) in tRNA = 7-aminomethyl-7-carbaguanosine(34) in tRNA + guanine. It participates in tRNA modification; tRNA-queuosine biosynthesis. Catalyzes the base-exchange of a guanine (G) residue with the queuine precursor 7-aminomethyl-7-deazaguanine (PreQ1) at position 34 (anticodon wobble position) in tRNAs with GU(N) anticodons (tRNA-Asp, -Asn, -His and -Tyr). Catalysis occurs through a double-displacement mechanism. The nucleophile active site attacks the C1' of nucleotide 34 to detach the guanine base from the RNA, forming a covalent enzyme-RNA intermediate. The proton acceptor active site deprotonates the incoming PreQ1, allowing a nucleophilic attack on the C1' of the ribose to form the product. After dissociation, two additional enzymatic reactions on the tRNA convert PreQ1 to queuine (Q), resulting in the hypermodified nucleoside queuosine (7-(((4,5-cis-dihydroxy-2-cyclopenten-1-yl)amino)methyl)-7-deazaguanosine). This chain is Queuine tRNA-ribosyltransferase, found in Geobacillus thermodenitrificans (strain NG80-2).